Consider the following 501-residue polypeptide: Aldehyde dehydrogenase 1A1 (501 aa).

Residue serine 2 is modified to N-acetylserine. Residues lysine 91 and lysine 128 each carry the N6-acetyllysine modification. Residues 167-170 (IPWN), 193-196 (KPAE), 226-227 (GP), and 246-247 (GS) contribute to the NAD(+) site. Lysine 252 carries the post-translational modification N6-acetyllysine. The Proton acceptor role is filled by glutamate 269. 269–271 (ELG) lines the NAD(+) pocket. Cysteine 303 functions as the Nucleophile in the catalytic mechanism. A mediates interaction with PRMT3 region spans residues 336–501 (LTPGVSQGPQ…VTIKISQKNS (166 aa)). At threonine 337 the chain carries Phosphothreonine. Residue 349 to 353 (EQYEK) coordinates NAD(+). Residues lysine 353 and lysine 367 each carry the N6-acetyllysine modification. Residue 400–402 (EIF) coordinates NAD(+). Residue lysine 410 is modified to N6-acetyllysine. Phosphoserine is present on serine 413. Residues lysine 419 and lysine 495 each carry the N6-acetyllysine modification.

It belongs to the aldehyde dehydrogenase family. In terms of assembly, homotetramer. Interacts with PRMT3; the interaction is direct, inhibits ALDH1A1 aldehyde dehydrogenase activity and is independent of the methyltransferase activity of PRMT3. Post-translationally, the N-terminus is blocked most probably by acetylation.

It is found in the cytoplasm. Its subcellular location is the cytosol. The protein localises to the cell projection. It localises to the axon. The catalysed reaction is an aldehyde + NAD(+) + H2O = a carboxylate + NADH + 2 H(+). It carries out the reaction all-trans-retinal + NAD(+) + H2O = all-trans-retinoate + NADH + 2 H(+). It catalyses the reaction 9-cis-retinal + NAD(+) + H2O = 9-cis-retinoate + NADH + 2 H(+). The enzyme catalyses 11-cis-retinal + NAD(+) + H2O = 11-cis-retinoate + NADH + 2 H(+). The catalysed reaction is 13-cis-retinal + NAD(+) + H2O = 13-cis-retinoate + NADH + 2 H(+). It carries out the reaction 3-deoxyglucosone + NAD(+) + H2O = 2-dehydro-3-deoxy-D-gluconate + NADH + 2 H(+). It catalyses the reaction (E)-4-hydroxynon-2-enal + NAD(+) + H2O = (E)-4-hydroxynon-2-enoate + NADH + 2 H(+). The enzyme catalyses malonaldehyde + NAD(+) + H2O = 3-oxopropanoate + NADH + 2 H(+). The catalysed reaction is hexanal + NAD(+) + H2O = hexanoate + NADH + 2 H(+). It carries out the reaction propanal + NAD(+) + H2O = propanoate + NADH + 2 H(+). It catalyses the reaction acetaldehyde + NAD(+) + H2O = acetate + NADH + 2 H(+). The enzyme catalyses benzaldehyde + NAD(+) + H2O = benzoate + NADH + 2 H(+). The catalysed reaction is 4-aminobutanal + NAD(+) + H2O = 4-aminobutanoate + NADH + 2 H(+). It participates in cofactor metabolism; retinol metabolism. With respect to regulation, inhibited by duocarmycin analogs. Cytosolic dehydrogenase that catalyzes the irreversible oxidation of a wide range of aldehydes to their corresponding carboxylic acid. Functions downstream of retinol dehydrogenases and catalyzes the oxidation of retinaldehyde into retinoic acid, the second step in the oxidation of retinol/vitamin A into retinoic acid. This pathway is crucial to control the levels of retinol and retinoic acid, two important molecules which excess can be teratogenic and cytotoxic. Also oxidizes aldehydes resulting from lipid peroxidation like (E)-4-hydroxynon-2-enal/HNE, malonaldehyde and hexanal that form protein adducts and are highly cytotoxic. By participating for instance to the clearance of (E)-4-hydroxynon-2-enal/HNE in the lens epithelium prevents the formation of HNE-protein adducts and lens opacification. Also functions downstream of fructosamine-3-kinase in the fructosamine degradation pathway by catalyzing the oxidation of 3-deoxyglucosone, the carbohydrate product of fructosamine 3-phosphate decomposition, which is itself a potent glycating agent that may react with lysine and arginine side-chains of proteins. Also has an aminobutyraldehyde dehydrogenase activity and is probably part of an alternative pathway for the biosynthesis of GABA/4-aminobutanoate in midbrain, thereby playing a role in GABAergic synaptic transmission. In Ovis aries (Sheep), this protein is Aldehyde dehydrogenase 1A1.